The sequence spans 1381 residues: DNA-directed RNA polymerase subunit beta'' (1381 aa).

The Zn(2+) site is built by Cys-220, Cys-293, Cys-300, and Cys-303.

The protein belongs to the RNA polymerase beta' chain family. RpoC2 subfamily. In plastids the minimal PEP RNA polymerase catalytic core is composed of four subunits: alpha, beta, beta', and beta''. When a (nuclear-encoded) sigma factor is associated with the core the holoenzyme is formed, which can initiate transcription. The cofactor is Zn(2+).

Its subcellular location is the plastid. The protein resides in the chloroplast. The catalysed reaction is RNA(n) + a ribonucleoside 5'-triphosphate = RNA(n+1) + diphosphate. Functionally, DNA-dependent RNA polymerase catalyzes the transcription of DNA into RNA using the four ribonucleoside triphosphates as substrates. The sequence is that of DNA-directed RNA polymerase subunit beta'' from Draba nemorosa (Woodland whitlowgrass).